We begin with the raw amino-acid sequence, 263 residues long: Proteasome subunit beta type-5 (263 aa).

The propeptide at 1 to 59 (MALASVLERPLPVNQRGFFGLGGRADLLDLGPGSLSDGLSLAAPGWGVPEEPGIEMLHG) is removed in mature form. The active-site Nucleophile is the Thr-60. Ala-108 serves as a coordination point for bortezomib.

It belongs to the peptidase T1B family. In terms of assembly, the 26S proteasome consists of a 20S proteasome core and two 19S regulatory subunits. The 20S proteasome core is a barrel-shaped complex made of 28 subunits that are arranged in four stacked rings. The two outer rings are each formed by seven alpha subunits, and the two inner rings are formed by seven beta subunits. The proteolytic activity is exerted by three beta-subunits PSMB5, PSMB6 and PSMB7. Directly interacts with POMP. Interacts with ABCB1 and TAP1. (Microbial infection) Interacts with HIV-1 TAT protein.

It is found in the cytoplasm. Its subcellular location is the nucleus. It catalyses the reaction Cleavage of peptide bonds with very broad specificity.. Component of the 20S core proteasome complex involved in the proteolytic degradation of most intracellular proteins. This complex plays numerous essential roles within the cell by associating with different regulatory particles. Associated with two 19S regulatory particles, forms the 26S proteasome and thus participates in the ATP-dependent degradation of ubiquitinated proteins. The 26S proteasome plays a key role in the maintenance of protein homeostasis by removing misfolded or damaged proteins that could impair cellular functions, and by removing proteins whose functions are no longer required. Associated with the PA200 or PA28, the 20S proteasome mediates ubiquitin-independent protein degradation. This type of proteolysis is required in several pathways including spermatogenesis (20S-PA200 complex) or generation of a subset of MHC class I-presented antigenic peptides (20S-PA28 complex). Within the 20S core complex, PSMB5 displays a chymotrypsin-like activity. The chain is Proteasome subunit beta type-5 from Homo sapiens (Human).